Here is a 182-residue protein sequence, read N- to C-terminus: Putative manganese efflux pump MntP (182 aa).

Transmembrane regions (helical) follow at residues Leu6–Gly26, Ile37–Val57, His71–Leu91, Ile101–Leu121, Ile131–Ile151, and Tyr162–Ile182.

It belongs to the MntP (TC 9.B.29) family.

It is found in the cell membrane. Probably functions as a manganese efflux pump. The sequence is that of Putative manganese efflux pump MntP from Bacillus cereus (strain ATCC 10987 / NRS 248).